The following is a 1088-amino-acid chain: Pathogenesis-related homeodomain protein (1088 aa).

8 tandem repeats follow at residues 140-152 (INMGQKETMPEEV), 173-199 (NSYQSGLPPENAVTDCKQVQLGHRSDD), 205-239 (GLVELVIGQKNVAKSPSQLVETGKRGRGRPRKVQT), 240-274 (GLEQLVIGQKTAAKSSSQLGDTGKRSRGRPRKVQN), 283-295 (INMEQKETIPEQV), 316-342 (NSDQSELPPENAAKNCNHAQFGHQSDD), 348-382 (GFKELVIGQETVAKSPSQLVDAGKRGRGRPRKVQT), and 383-417 (GLEQLVPVQETAAKSSSQLGDTGKRSRGRPRKVQD). Positions 140–295 (INMGQKETMP…EQKETIPEQV (156 aa)) are 2 X 13 AA repeats. The 2 X 27 AA approximate repeats stretch occupies residues 173–342 (NSYQSGLPPE…HAQFGHQSDD (170 aa)). A 2 X 35 AA approximate tandem repeats (type C) region spans residues 205-274 (GLVELVIGQK…SRGRPRKVQN (70 aa)). The tract at residues 220-282 (PSQLVETGKR…QNSPTSFLEN (63 aa)) is disordered. DNA-binding regions (a.T hook) lie at residues 226–236 (TGKRGRGRPRK) and 261–271 (TGKRSRGRPRK). Residues 272–282 (VQNSPTSFLEN) show a composition bias toward polar residues. A compositionally biased stretch (polar residues) spans 303–320 (SLTIPTDNQSRTYNSDQS). Disordered regions lie at residues 303–343 (SLTI…SDDT) and 363–484 (PSQL…RMEE). Positions 348–417 (GFKELVIGQE…SRGRPRKVQD (70 aa)) are 2 X 35 AA approximate tandem repeats (type C). 2 consecutive DNA-binding regions (a.T hook) follow at residues 369–379 (AGKRGRGRPRK) and 404–414 (TGKRSRGRPRK). Residues 578–635 (DIFCAKCGSKDVTLSNDIILCDGACDRGFHQFCLDPPLLKEYIPPDDEGWLCPGCECK) form a PHD-type zinc finger. Disordered stretches follow at residues 667 to 810 (AASG…PLYP) and 851 to 901 (EEYG…ARES). Residues 678–693 (GLPSDDSEDDDYDPGG) form a 4-1 repeat. Residues 678–744 (GLPSDDSEDD…SEDDEYDPSG (67 aa)) form a 2 X 16 AA Asp/Glu-rich (acidic) repeats region. The segment covering 705–718 (SSTDESDYQSESDD) has biased composition (acidic residues). One copy of the 4-2 repeat lies at 729–744 (GLPSDDSEDDEYDPSG). 2 stretches are compositionally biased toward basic and acidic residues: residues 788–802 (DHVRNNEEGCGHPEQ) and 874–901 (NNSDKEATAMERGRESGDLELDQKARES). Positions 935–994 (KSTSKTLHGEHATQRLLQSFKENQYPQRAVKESLAAELALSVRQVSNWFNNRRWSFRHSS) form a DNA-binding region, homeobox.

The protein belongs to the PHD-associated homeobox family.

It is found in the nucleus. Functionally, specifically binds to the fungal elicitor-responsive DNA element, 5'-CTAATTGTTTA-3', of the gene PR2 promoter. The protein is Pathogenesis-related homeodomain protein (PRH) of Petroselinum crispum (Parsley).